Consider the following 31-residue polypeptide: Delta-conotoxin-like ErVIA (31 aa).

Residues 1–4 (LNKR) constitute a propeptide that is removed on maturation. Disulfide bonds link cysteine 5/cysteine 21, cysteine 12/cysteine 25, and cysteine 20/cysteine 29.

Belongs to the conotoxin O1 superfamily. In terms of tissue distribution, expressed by the venom duct.

It localises to the secreted. In terms of biological role, this toxin activates voltage-gated sodium channels. It shifts the voltage-dependence of activation to more hyperpolarized potentials but has only little effect on channel inactivation. It is active on Nav1.3/SCN3A (EC(50)=3.98 nM), Nav1.4/SCN4A (EC(50)=4.99 nM), Nav1.6/SCN8A (EC(50)=1.27 nM) and Nav1.7/SCN9A (EC(50)=2.42 nM) voltage-gated sodium channels. In vivo, it induces nocifensive or pain-like behaviors in mice when injected intraplantarly. This is Delta-conotoxin-like ErVIA from Conus eburneus (Ivory cone).